A 157-amino-acid polypeptide reads, in one-letter code: Probable succinate transporter subunit YjjB (157 aa).

Helical transmembrane passes span L8 to F28, M50 to V70, V87 to I107, and F129 to W149.

This sequence belongs to the ThrE exporter (TC 2.A.79) family. The transporter is composed of YjjB and YjjP.

It is found in the cell inner membrane. In terms of biological role, involved in succinate export with YjjP. Both proteins are required for export. The polypeptide is Probable succinate transporter subunit YjjB (Shigella flexneri serotype 5b (strain 8401)).